The following is a 369-amino-acid chain: Chorismate synthase (369 aa).

NADP(+)-binding residues include arginine 48 and arginine 54. FMN is bound by residues 125 to 127, 238 to 239, glycine 278, 293 to 297, and arginine 319; these read RSS, NA, and KPTSS.

The protein belongs to the chorismate synthase family. Homotetramer. It depends on FMNH2 as a cofactor.

The catalysed reaction is 5-O-(1-carboxyvinyl)-3-phosphoshikimate = chorismate + phosphate. The protein operates within metabolic intermediate biosynthesis; chorismate biosynthesis; chorismate from D-erythrose 4-phosphate and phosphoenolpyruvate: step 7/7. Catalyzes the anti-1,4-elimination of the C-3 phosphate and the C-6 proR hydrogen from 5-enolpyruvylshikimate-3-phosphate (EPSP) to yield chorismate, which is the branch point compound that serves as the starting substrate for the three terminal pathways of aromatic amino acid biosynthesis. This reaction introduces a second double bond into the aromatic ring system. This chain is Chorismate synthase, found in Burkholderia thailandensis (strain ATCC 700388 / DSM 13276 / CCUG 48851 / CIP 106301 / E264).